The following is a 377-amino-acid chain: Protein MULTIPOLAR SPINDLE 1 (377 aa).

The Nuclear localization signal motif lies at 117–124 (LRRRFLRL).

In terms of tissue distribution, expressed in roots, stems, leaves, inflorescences and seedlings. Strongly expressed in meiocytes.

The protein localises to the nucleus. It localises to the cytoplasm. It is found in the cytoskeleton. Its subcellular location is the spindle. In terms of biological role, involved in meiotic spindle organization in meiocytes thus regulating chromosome segregation. Required for formation of meiotic DNA double-strand breaks (DSBs) during early recombination processes. This is Protein MULTIPOLAR SPINDLE 1 from Arabidopsis thaliana (Mouse-ear cress).